The primary structure comprises 267 residues: 3-methyl-2-oxobutanoate hydroxymethyltransferase (267 aa).

Mg(2+) contacts are provided by Asp46 and Asp85. 3-methyl-2-oxobutanoate is bound by residues 46–47, Asp85, and Lys115; that span reads DS. Glu117 contributes to the Mg(2+) binding site. The active-site Proton acceptor is Glu184.

It belongs to the PanB family. Homodecamer; pentamer of dimers. Mg(2+) serves as cofactor.

The protein resides in the cytoplasm. It carries out the reaction 3-methyl-2-oxobutanoate + (6R)-5,10-methylene-5,6,7,8-tetrahydrofolate + H2O = 2-dehydropantoate + (6S)-5,6,7,8-tetrahydrofolate. It functions in the pathway cofactor biosynthesis; (R)-pantothenate biosynthesis; (R)-pantoate from 3-methyl-2-oxobutanoate: step 1/2. Functionally, catalyzes the reversible reaction in which hydroxymethyl group from 5,10-methylenetetrahydrofolate is transferred onto alpha-ketoisovalerate to form ketopantoate. This is 3-methyl-2-oxobutanoate hydroxymethyltransferase from Syntrophotalea carbinolica (strain DSM 2380 / NBRC 103641 / GraBd1) (Pelobacter carbinolicus).